Here is a 273-residue protein sequence, read N- to C-terminus: DnaJ homolog subfamily C member 27 (273 aa).

Positions 1-18 (MEANMPKRKEPGRSLRIK) are required for interaction with MAPK1. GTP-binding positions include 23–30 (GNAEVGKS), 71–75 (DMAGH), and 134–137 (NKID). Positions 217–273 (GSWDMLGVKPGASRDEVNKACRKLAVLLHPDKCVAPGSEDAFKAVVNARTALLKNIK) constitute a J domain.

Belongs to the small GTPase superfamily. Rab family. As to quaternary structure, interacts directly with MAPK1 (wild-type and kinase-deficient forms). Interacts directly (in GTP-bound form) with MAP2K1 (wild-type and kinase-deficient forms).

Its subcellular location is the nucleus. Functionally, GTPase which can activate the MEK/ERK pathway and induce cell transformation when overexpressed. May act as a nuclear scaffold for MAPK1, probably by association with MAPK1 nuclear export signal leading to enhanced ERK1/ERK2 signaling. This is DnaJ homolog subfamily C member 27 (DNAJC27) from Pongo abelii (Sumatran orangutan).